We begin with the raw amino-acid sequence, 1705 residues long: Receptor-type tyrosine-protein phosphatase V (1705 aa).

The first 18 residues, 1 to 18 (MRPLILLAALLWLQDSLA), serve as a signal peptide directing secretion. Residues 19–1077 (QEDVCSSLDG…QASISLVAMP (1059 aa)) lie on the Extracellular side of the membrane. Residues 24-44 (SSLDGSPDRQGGGPPLSVSVT) are disordered. 10 Fibronectin type-III domains span residues 37-129 (PPLS…TAPT), 130-222 (VVRG…VPPD), 218-305 (PVPP…EWTY), 306-388 (PSYP…SIWL), 393-454 (ARPM…HYRV), 475-569 (PPQS…APPT), 565-654 (PAPP…TGWT), 655-749 (PPSA…TPNE), 744-831 (PLTP…VLSV), and 832-926 (EPGP…SAEV). N74, N89, N117, N174, N239, N259, N299, N345, N431, N551, N570, N620, N649, N663, and N737 each carry an N-linked (GlcNAc...) asparagine glycan. N-linked (GlcNAc...) asparagine glycosylation is found at N851, N882, N970, and N982. Residues 1078-1100 (LTVMMGTVVGCIIIVCAVLCLLC) traverse the membrane as a helical segment. At 1101-1705 (RRGLKGPRSE…LRNRLPRARK (605 aa)) the chain is on the cytoplasmic side. 2 Tyrosine-protein phosphatase domains span residues 1150 to 1409 (FFQE…LLNK) and 1427 to 1695 (NFAQ…LNSA). Substrate-binding positions include D1316, 1350–1356 (CSAGVGR), and Q1394. Residue C1350 is the Phosphocysteine intermediate of the active site.

The protein belongs to the protein-tyrosine phosphatase family. Receptor class 3 subfamily.

It is found in the membrane. It catalyses the reaction O-phospho-L-tyrosyl-[protein] + H2O = L-tyrosyl-[protein] + phosphate. Functionally, protein tyrosine phosphatase that acts as a regulator of energy metabolism by mediating dephosphorylation of insulin receptor (Insr). Prevents decarboxylation of osteocalcin (Bglap and Bglap2) via an indirect mechanism: dephosphorylation of insulin receptor prevents insulin signaling-dependent decarboxylation of osteocalcin, preventing the hormone activity of osteocalcin. May play a role in the maintenance of pluripotency. The chain is Receptor-type tyrosine-protein phosphatase V (Ptprv) from Mus musculus (Mouse).